The primary structure comprises 446 residues: Chromosomal replication initiator protein DnaA (446 aa).

Residues 1–72 (MKNISDLWNQ…ADTIYDLTGE (72 aa)) are domain I, interacts with DnaA modulators. The domain II stretch occupies residues 72–109 (EELSIKFVIPQNQNEEDFMPKSPIKKMSKEEPADFPQN). Residues 110 to 326 (MLNPKYTFDT…GALIRVVAYS (217 aa)) form a domain III, AAA+ region region. 4 residues coordinate ATP: glycine 154, glycine 156, lysine 157, and threonine 158. The segment at 327-446 (SLINKDINAD…QIKEIKEQLR (120 aa)) is domain IV, binds dsDNA.

This sequence belongs to the DnaA family. Oligomerizes as a right-handed, spiral filament on DNA at oriC.

It is found in the cytoplasm. Its function is as follows. Plays an essential role in the initiation and regulation of chromosomal replication. ATP-DnaA binds to the origin of replication (oriC) to initiate formation of the DNA replication initiation complex once per cell cycle. Binds the DnaA box (a 9 base pair repeat at the origin) and separates the double-stranded (ds)DNA. Forms a right-handed helical filament on oriC DNA; dsDNA binds to the exterior of the filament while single-stranded (ss)DNA is stabiized in the filament's interior. The ATP-DnaA-oriC complex binds and stabilizes one strand of the AT-rich DNA unwinding element (DUE), permitting loading of DNA polymerase. After initiation quickly degrades to an ADP-DnaA complex that is not apt for DNA replication. Binds acidic phospholipids. The polypeptide is Chromosomal replication initiator protein DnaA (Bacillus licheniformis (strain ATCC 14580 / DSM 13 / JCM 2505 / CCUG 7422 / NBRC 12200 / NCIMB 9375 / NCTC 10341 / NRRL NRS-1264 / Gibson 46)).